An 840-amino-acid polypeptide reads, in one-letter code: Exocyst complex component 7 (840 aa).

Residues Met-1–Tyr-112 form a disordered region. A compositionally biased stretch (polar residues) spans Ser-19–Lys-31. 2 stretches are compositionally biased toward low complexity: residues Lys-50–Lys-73 and Gln-83–Ser-111. Positions Lys-193–Met-227 form a coiled coil. The tract at residues Gln-601–Thr-638 is disordered. Positions Asn-603 to Ser-637 are enriched in low complexity.

Belongs to the EXO70 family. In terms of assembly, the exocyst complex is composed of sec3/exoc1, sec5/exoc2, sec6/exoc3, sec8/exoc4, sec10/exoc5, sec15/exoc6, exo70/exoc7 and exo84/exoc8.

Its subcellular location is the cytoplasm. It localises to the cytosol. It is found in the cell membrane. The protein resides in the midbody. The protein localises to the midbody ring. Functionally, component of the exocyst complex involved in the docking of exocytic vesicles with fusion sites on the plasma membrane. This Dictyostelium discoideum (Social amoeba) protein is Exocyst complex component 7 (exoc7).